The chain runs to 1281 residues: Tubulin polyglutamylase TTLL5 (1281 aa).

The TTL domain occupies 62-407 (RYHLSYKIVR…VCQDPAQRAS (346 aa)). ATP contacts are provided by residues Lys180, 186-187 (RG), 208-211 (SRYI), and 221-223 (KFD). Arg186 lines the a protein pocket. Arg247 contacts L-glutamate. 268–269 (TN) provides a ligand contact to ATP. Residues Tyr270, Ser271, and Lys293 each contribute to the L-glutamate site. Residues Asp353, Glu366, and Asn368 each coordinate Mg(2+). A c-MTBD region region spans residues 378-488 (PLDLKIKASM…RGGFIRIFPT (111 aa)). Lys384 lines the L-glutamate pocket. Disordered stretches follow at residues 577 to 614 (MNVKTETESEEEEEVALDNEDEEQEASQEESAGFLREN), 1072 to 1114 (SASA…LQTG), and 1199 to 1281 (SSAT…HTKI). Over residues 584-604 (ESEEEEEVALDNEDEEQEASQ) the composition is skewed to acidic residues. 4 stretches are compositionally biased toward polar residues: residues 1086-1113 (SGPTWSTQSDPQAPENHSSSPGSRSLQT), 1199-1212 (SSATASGQKPTTLP), 1240-1263 (ATSQKASKGSSAEGQLNGLQSSLN), and 1270-1281 (ITSSTDPAHTKI).

The protein belongs to the tubulin--tyrosine ligase family. As to quaternary structure, interacts with the transcriptional coactivators NCOA1/SRC-1 and NCOA2/TIF2. It depends on Mg(2+) as a cofactor. As to expression, expressed in the retina, found in the rod and cone photoreceptors (at protein level). Widely expressed with highest levels in heart and skeletal muscle and low levels in other tissues.

Its subcellular location is the cell projection. It is found in the cilium. It localises to the cytoplasm. The protein resides in the cytoskeleton. The protein localises to the cilium basal body. Its subcellular location is the nucleus. The enzyme catalyses L-glutamyl-[protein] + L-glutamate + ATP = gamma-L-glutamyl-L-glutamyl-[protein] + ADP + phosphate + H(+). It catalyses the reaction (L-glutamyl)(n)-gamma-L-glutamyl-L-glutamyl-[protein] + L-glutamate + ATP = (L-glutamyl)(n+1)-gamma-L-glutamyl-L-glutamyl-[protein] + ADP + phosphate + H(+). In terms of biological role, polyglutamylase which modifies tubulin, generating polyglutamate side chains on the gamma-carboxyl group of specific glutamate residues within the C-terminal tail of tubulin. Preferentially mediates ATP-dependent initiation step of the polyglutamylation reaction over the elongation step. Preferentially modifies the alpha-tubulin tail over a beta-tail. Required for CCSAP localization to both polyglutamylated spindle and cilia microtubules. Increases the effects of transcriptional coactivator NCOA2/TIF2 in glucocorticoid receptor-mediated repression and induction and in androgen receptor-mediated induction. This chain is Tubulin polyglutamylase TTLL5, found in Homo sapiens (Human).